We begin with the raw amino-acid sequence, 382 residues long: Dual-specificity RNA methyltransferase RlmN (382 aa).

E95 (proton acceptor) is an active-site residue. The Radical SAM core domain maps to E101 to D348. A disulfide bond links C108 and C353. The [4Fe-4S] cluster site is built by C115, C119, and C122. S-adenosyl-L-methionine contacts are provided by residues G179–E180, S211, S233–H235, and N310. The active-site S-methylcysteine intermediate is C353.

Belongs to the radical SAM superfamily. RlmN family. Requires [4Fe-4S] cluster as cofactor.

The protein resides in the cytoplasm. It catalyses the reaction adenosine(2503) in 23S rRNA + 2 reduced [2Fe-2S]-[ferredoxin] + 2 S-adenosyl-L-methionine = 2-methyladenosine(2503) in 23S rRNA + 5'-deoxyadenosine + L-methionine + 2 oxidized [2Fe-2S]-[ferredoxin] + S-adenosyl-L-homocysteine. The catalysed reaction is adenosine(37) in tRNA + 2 reduced [2Fe-2S]-[ferredoxin] + 2 S-adenosyl-L-methionine = 2-methyladenosine(37) in tRNA + 5'-deoxyadenosine + L-methionine + 2 oxidized [2Fe-2S]-[ferredoxin] + S-adenosyl-L-homocysteine. Its function is as follows. Specifically methylates position 2 of adenine 2503 in 23S rRNA and position 2 of adenine 37 in tRNAs. m2A2503 modification seems to play a crucial role in the proofreading step occurring at the peptidyl transferase center and thus would serve to optimize ribosomal fidelity. The sequence is that of Dual-specificity RNA methyltransferase RlmN from Bordetella parapertussis (strain 12822 / ATCC BAA-587 / NCTC 13253).